The chain runs to 89 residues: Small ribosomal subunit protein uS15 (89 aa).

The protein belongs to the universal ribosomal protein uS15 family. Part of the 30S ribosomal subunit. Forms a bridge to the 50S subunit in the 70S ribosome, contacting the 23S rRNA.

Its function is as follows. One of the primary rRNA binding proteins, it binds directly to 16S rRNA where it helps nucleate assembly of the platform of the 30S subunit by binding and bridging several RNA helices of the 16S rRNA. Functionally, forms an intersubunit bridge (bridge B4) with the 23S rRNA of the 50S subunit in the ribosome. This is Small ribosomal subunit protein uS15 from Cupriavidus pinatubonensis (strain JMP 134 / LMG 1197) (Cupriavidus necator (strain JMP 134)).